The sequence spans 273 residues: Large ribosomal subunit protein uL2 (273 aa).

Disordered stretches follow at residues L34–I54 and V223–K273.

Belongs to the universal ribosomal protein uL2 family. In terms of assembly, part of the 50S ribosomal subunit. Forms a bridge to the 30S subunit in the 70S ribosome.

In terms of biological role, one of the primary rRNA binding proteins. Required for association of the 30S and 50S subunits to form the 70S ribosome, for tRNA binding and peptide bond formation. It has been suggested to have peptidyltransferase activity; this is somewhat controversial. Makes several contacts with the 16S rRNA in the 70S ribosome. This is Large ribosomal subunit protein uL2 from Pseudomonas aeruginosa (strain LESB58).